The following is a 556-amino-acid chain: Guanosine-diphosphatase (556 aa).

Over 1–12 (MTPTMKSIARRK) the chain is Cytoplasmic. A helical; Signal-anchor for type II membrane protein membrane pass occupies residues 13 to 33 (ALLIALSIFAVTFILWNGFPG). Topologically, residues 34-556 (SSNRPLPSSN…GWNCNVKEEI (523 aa)) are lumenal. Glu256 functions as the Proton acceptor in the catalytic mechanism. A glycan (N-linked (GlcNAc...) asparagine) is linked at Asn372.

The protein belongs to the GDA1/CD39 NTPase family. It depends on Ca(2+) as a cofactor. The cofactor is Mn(2+).

It is found in the golgi apparatus membrane. It catalyses the reaction GDP + H2O = GMP + phosphate + H(+). It functions in the pathway protein modification; protein glycosylation. Its function is as follows. After transfer of sugars to endogenous macromolecular acceptors, the enzyme converts nucleoside diphosphates to nucleoside monophosphates which in turn exit the Golgi lumen in a coupled antiporter reaction, allowing entry of additional nucleotide sugar from the cytosol. This chain is Guanosine-diphosphatase (gdp1), found in Schizosaccharomyces pombe (strain 972 / ATCC 24843) (Fission yeast).